The chain runs to 721 residues: S-adenosyl-L-methionine-dependent tRNA 4-demethylwyosine synthase TYW1 (721 aa).

Residues 71-229 form the Flavodoxin-like domain; the sequence is VKIFYGSQTG…DFTAWKTKFI (159 aa). FMN contacts are provided by residues 77–81 and 168–200; these read SQTGT and VFGL…QRVL. 2 disordered regions span residues 242–291 and 305–339; these read ACGG…ELGT and DLGN…TEDG. Residues 250 to 274 are compositionally biased toward basic and acidic residues; that stretch reads GKCESAQHGPGEARPHPQGELHPGD. Over residues 275–290 the composition is skewed to acidic residues; sequence AEEEEPCESSSEDELG. The span at 313–325 shows a compositional bias: basic and acidic residues; sequence VKREKREKSHQDG. The Radical SAM core domain occupies 389-635; that stretch reads YGIESHRCME…LLPDYEVACE (247 aa). [4Fe-4S] cluster contacts are provided by Cys-405, Cys-409, and Cys-412.

Belongs to the TYW1 family. Requires [4Fe-4S] cluster as cofactor.

The catalysed reaction is N(1)-methylguanosine(37) in tRNA(Phe) + pyruvate + S-adenosyl-L-methionine = 4-demethylwyosine(37) in tRNA(Phe) + 5'-deoxyadenosine + L-methionine + CO2 + H2O. It participates in tRNA modification; wybutosine-tRNA(Phe) biosynthesis. Its function is as follows. Probable component of the wybutosine biosynthesis pathway. Wybutosine is a hyper modified guanosine with a tricyclic base found at the 3'-position adjacent to the anticodon of eukaryotic phenylalanine tRNA. Catalyzes the condensation of N-methylguanine with 2 carbon atoms from pyruvate to form the tricyclic 4-demethylwyosine, an intermediate in wybutosine biosynthesis. This chain is S-adenosyl-L-methionine-dependent tRNA 4-demethylwyosine synthase TYW1 (Tyw1), found in Mus musculus (Mouse).